The sequence spans 283 residues: Rhomboid-like protease 2 (283 aa).

The segment covering 1–11 (MANIRTLSDYA) has biased composition (polar residues). The segment at 1–26 (MANIRTLSDYASSPPRGSSALEGEVG) is disordered. Helical transmembrane passes span 62–82 (IIII…AGLA), 114–134 (ICPL…WVQI), and 149–169 (LLAV…AVLF). S178 acts as the Nucleophile in catalysis. The next 4 membrane-spanning stretches (helical) occupy residues 179-199 (TAVF…WHAI), 205-225 (AIIS…GSHM), 227-247 (SVGH…LNEN), and 260-280 (LTSQ…IFLV). H230 is a catalytic residue.

It belongs to the peptidase S54 family.

The protein resides in the membrane. The catalysed reaction is Cleaves type-1 transmembrane domains using a catalytic dyad composed of serine and histidine that are contributed by different transmembrane domains.. Functionally, serine protease involved in intramembrane proteolysis and the subsequent release of polypeptides from their membrane anchors. In Toxoplasma gondii, this protein is Rhomboid-like protease 2 (ROM2).